Here is a 154-residue protein sequence, read N- to C-terminus: Ascorbate-specific PTS system EIIA component (154 aa).

The PTS EIIA type-2 domain maps to 6–150 (SLAENKSIRL…QEVLDLIDRT (145 aa)). His-68 serves as the catalytic Tele-phosphohistidine intermediate. His-68 bears the Phosphohistidine mark.

The protein localises to the cytoplasm. Its function is as follows. The phosphoenolpyruvate-dependent sugar phosphotransferase system (sugar PTS), a major carbohydrate active transport system, catalyzes the phosphorylation of incoming sugar substrates concomitantly with their translocation across the cell membrane. The enzyme II UlaABC PTS system is involved in ascorbate transport. This is Ascorbate-specific PTS system EIIA component (ulaC) from Escherichia coli O157:H7.